The following is a 101-amino-acid chain: Olivetolic acid cyclase (101 aa).

Residues 3-97 (VKHLIVLKFK…FWEKLLIFDY (95 aa)) enclose the Stress-response A/B barrel domain. H5 provides a ligand contact to 3,5,7-trioxododecanoyl-CoA. 3 residues coordinate Mg(2+): V31, I34, and M37. Y72 contributes to the 3,5,7-trioxododecanoyl-CoA binding site. Active-site acid/base catalyst residues include Y72 and H75.

Homodimer. Expressed in glandular trichomes and at lower levels in female flowers.

Its subcellular location is the cytoplasm. The enzyme catalyses 3,5,7-trioxododecanoyl-CoA = olivetolate + CoA + H(+). The protein operates within secondary metabolite biosynthesis; terpenoid biosynthesis. In terms of biological role, involved in the biosynthesis of cannabinoids-related terpenophenolic natural products, which have pharmacological activity. Polyketide cyclase which functions in concert with OLS/TKS to form olivetolic acid. Has no intrinsic polyketide synthase activity and requires the presence of OLS to produce olivetolic acid. The protein is Olivetolic acid cyclase of Cannabis sativa (Hemp).